The following is a 136-amino-acid chain: MGSKGLKGVMVCLLILGLVLEHVQVEGKSCCRSTLGRNCYNLCRVRGAQKLCANACRCKLTSGLKCPSSFPKLALVSNSDEPDTIDYCNLGCRASMCDYMVNAAADDEEMKLYVEHCSDACVNFCNGDVGLTSLTA.

The first 27 residues, 1–27 (MGSKGLKGVMVCLLILGLVLEHVQVEG), serve as a signal peptide directing secretion. 4 disulfide bridges follow: Cys30-Cys66, Cys31-Cys58, Cys39-Cys56, and Cys43-Cys52. A propeptide spans 73 to 136 (LALVSNSDEP…GDVGLTSLTA (64 aa)) (acidic domain).

It belongs to the plant thionin (TC 1.C.44) family. 4 C-C subfamily. As to quaternary structure, homodimer.

The protein resides in the secreted. Its function is as follows. Thionins are small plant proteins which are toxic to animal cells. They seem to exert their toxic effect at the level of the cell membrane. Their precise function is not known. The chain is Beta-hordothionin (THI1.2) from Hordeum vulgare (Barley).